The following is a 158-amino-acid chain: uncharacterized protein (158 aa).

Its function is as follows. The presence of the two linear plasmids, termed pGKL1 and pGKL2, in strains of Kluyveromyces lactis confers the killer phenotype to the host cell, by promoting the secretion of a toxin able to inhibit the growth of sensitive strains. This is an uncharacterized protein from Kluyveromyces lactis (strain ATCC 8585 / CBS 2359 / DSM 70799 / NBRC 1267 / NRRL Y-1140 / WM37) (Yeast).